The primary structure comprises 314 residues: Probable 5-dehydro-4-deoxyglucarate dehydratase (314 aa).

This sequence belongs to the DapA family.

It carries out the reaction 5-dehydro-4-deoxy-D-glucarate + H(+) = 2,5-dioxopentanoate + CO2 + H2O. Its pathway is carbohydrate acid metabolism; D-glucarate degradation; 2,5-dioxopentanoate from D-glucarate: step 2/2. In Bradyrhizobium diazoefficiens (strain JCM 10833 / BCRC 13528 / IAM 13628 / NBRC 14792 / USDA 110), this protein is Probable 5-dehydro-4-deoxyglucarate dehydratase.